We begin with the raw amino-acid sequence, 182 residues long: Trypsin inhibitor 2 (182 aa).

Q1 carries the post-translational modification Pyrrolidone carboxylic acid. Intrachain disulfides connect C40/C84 and C136/C147.

The protein belongs to the protease inhibitor I3 (leguminous Kunitz-type inhibitor) family.

The chain is Trypsin inhibitor 2 from Psophocarpus tetragonolobus (Winged bean).